Consider the following 171-residue polypeptide: 3-hydroxydecanoyl-[acyl-carrier-protein] dehydratase (171 aa).

Residue H70 is part of the active site.

This sequence belongs to the thioester dehydratase family. FabA subfamily. As to quaternary structure, homodimer.

The protein resides in the cytoplasm. It catalyses the reaction a (3R)-hydroxyacyl-[ACP] = a (2E)-enoyl-[ACP] + H2O. The catalysed reaction is (3R)-hydroxydecanoyl-[ACP] = (2E)-decenoyl-[ACP] + H2O. It carries out the reaction (2E)-decenoyl-[ACP] = (3Z)-decenoyl-[ACP]. It participates in lipid metabolism; fatty acid biosynthesis. Functionally, necessary for the introduction of cis unsaturation into fatty acids. Catalyzes the dehydration of (3R)-3-hydroxydecanoyl-ACP to E-(2)-decenoyl-ACP and then its isomerization to Z-(3)-decenoyl-ACP. Can catalyze the dehydratase reaction for beta-hydroxyacyl-ACPs with saturated chain lengths up to 16:0, being most active on intermediate chain length. The sequence is that of 3-hydroxydecanoyl-[acyl-carrier-protein] dehydratase from Stenotrophomonas maltophilia (strain K279a).